A 270-amino-acid chain; its full sequence is Fibroblast growth factor 5 (270 aa).

The N-terminal stretch at methionine 1–alanine 20 is a signal peptide. Residues arginine 25 to serine 86 form a disordered region. Residues proline 41–arginine 69 are compositionally biased toward low complexity. Residues leucine 76–serine 86 are compositionally biased toward polar residues. N-linked (GlcNAc...) asparagine glycosylation is present at asparagine 112. Residues glutamate 237–serine 257 are disordered.

This sequence belongs to the heparin-binding growth factors family. As to quaternary structure, interacts with FGFR1 and FGFR2. Affinity between fibroblast growth factors (FGFs) and their receptors is increased by heparan sulfate glycosaminoglycans that function as coreceptors.

The protein localises to the secreted. Functionally, plays an important role in the regulation of cell proliferation and cell differentiation. Required for normal regulation of the hair growth cycle. Functions as an inhibitor of hair elongation by promoting progression from anagen, the growth phase of the hair follicle, into catagen the apoptosis-induced regression phase. This Bos taurus (Bovine) protein is Fibroblast growth factor 5 (FGF5).